Consider the following 236-residue polypeptide: MKTQIYKGSSKILYSAEEDFLLIMAFSDNGILESGEIIEVSGKGVLNNNISSFLMDKLEMIGIENHFIEKINMREQLIQYVEVFPVQVIISSVACGRFVKEFGMDEGYVFDKPIIDFKVRSREFKYPIVNEYQILNFSWLTLDEIKAVKEQALRIYAFLSGLFMGVGIRLVECKLEFGRVLNGEESIIMLTDEISPDNCRLWHIHSNEKLGFELLENKPNKAFESYQLIADRLKEK.

It belongs to the SAICAR synthetase family.

It carries out the reaction 5-amino-1-(5-phospho-D-ribosyl)imidazole-4-carboxylate + L-aspartate + ATP = (2S)-2-[5-amino-1-(5-phospho-beta-D-ribosyl)imidazole-4-carboxamido]succinate + ADP + phosphate + 2 H(+). The protein operates within purine metabolism; IMP biosynthesis via de novo pathway; 5-amino-1-(5-phospho-D-ribosyl)imidazole-4-carboxamide from 5-amino-1-(5-phospho-D-ribosyl)imidazole-4-carboxylate: step 1/2. The sequence is that of Phosphoribosylaminoimidazole-succinocarboxamide synthase from Rickettsia akari (strain Hartford).